Here is a 290-residue protein sequence, read N- to C-terminus: GTPase Era (290 aa).

Residues 2–144 form the Era-type G domain; that stretch reads KVLKVGVLGP…AIILEEFKPQ (143 aa). Positions 10 to 17 are G1; that stretch reads GPTNAGKS. 10–17 lines the GTP pocket; the sequence is GPTNAGKS. Residues 36–40 form a G2 region; that stretch reads NTTLL. Residues 58 to 61 are G3; the sequence is DVPG. 58 to 62 contributes to the GTP binding site; it reads DVPGF. Residues 97–100 form a G4 region; the sequence is NKIE. A G5 region spans residues 121 to 123; the sequence is INK. Residue 122 to 125 coordinates GTP; that stretch reads NKFH. A KH type-2 domain is found at 201-279; that stretch reads CKNEIPHIAR…FIDIFVKTEK (79 aa).

The protein belongs to the TRAFAC class TrmE-Era-EngA-EngB-Septin-like GTPase superfamily. Era GTPase family. As to quaternary structure, monomer.

It is found in the cytoplasm. The protein localises to the cell membrane. Its function is as follows. An essential GTPase that binds both GDP and GTP, with rapid nucleotide exchange. Plays a role in 16S rRNA processing and 30S ribosomal subunit biogenesis and possibly also in cell cycle regulation and energy metabolism. The polypeptide is GTPase Era (Mycoplasma genitalium (strain ATCC 33530 / DSM 19775 / NCTC 10195 / G37) (Mycoplasmoides genitalium)).